Here is a 232-residue protein sequence, read N- to C-terminus: Orotidine 5'-phosphate decarboxylase (232 aa).

Residues aspartate 11, lysine 33, 60–69 (DLKFHDIPTT), threonine 120, arginine 181, glutamine 191, glycine 211, and arginine 212 contribute to the substrate site. Lysine 62 serves as the catalytic Proton donor.

The protein belongs to the OMP decarboxylase family. Type 1 subfamily. In terms of assembly, homodimer.

It carries out the reaction orotidine 5'-phosphate + H(+) = UMP + CO2. The protein operates within pyrimidine metabolism; UMP biosynthesis via de novo pathway; UMP from orotate: step 2/2. Functionally, catalyzes the decarboxylation of orotidine 5'-monophosphate (OMP) to uridine 5'-monophosphate (UMP). This Tolumonas auensis (strain DSM 9187 / NBRC 110442 / TA 4) protein is Orotidine 5'-phosphate decarboxylase.